Consider the following 223-residue polypeptide: Orotate phosphoribosyltransferase (223 aa).

5-phospho-alpha-D-ribose 1-diphosphate-binding positions include Arg107, Lys108, Lys111, His113, and 133 to 141 (EDLTTAGGS). Residue Thr137 participates in orotate binding. The segment covering 192–211 (SPGSRSSSTTRRCRKSSPSS) has biased composition (low complexity). Positions 192–212 (SPGSRSSSTTRRCRKSSPSSM) are disordered.

This sequence belongs to the purine/pyrimidine phosphoribosyltransferase family. PyrE subfamily. Homodimer. Requires Mg(2+) as cofactor.

The catalysed reaction is orotidine 5'-phosphate + diphosphate = orotate + 5-phospho-alpha-D-ribose 1-diphosphate. The protein operates within pyrimidine metabolism; UMP biosynthesis via de novo pathway; UMP from orotate: step 1/2. Functionally, catalyzes the transfer of a ribosyl phosphate group from 5-phosphoribose 1-diphosphate to orotate, leading to the formation of orotidine monophosphate (OMP). This chain is Orotate phosphoribosyltransferase (pyrE), found in Rhizobium leguminosarum bv. trifolii.